The chain runs to 301 residues: (R)-2-haloacid dehalogenase (301 aa).

It belongs to the HAD-like hydrolase superfamily. S-2-haloalkanoic acid dehalogenase family. As to quaternary structure, homotetramer.

It catalyses the reaction an (R)-2-haloacid + H2O = a (2S)-2-hydroxycarboxylate + a halide anion + H(+). Its function is as follows. Catalyzes the hydrolytic dehalogenation of small (R)-2-haloalkanoic acids to yield the corresponding (S)-2-hydroxyalkanoic acids. Acts on acids of short chain lengths, C(2) to C(4), with inversion of configuration at C-2. The sequence is that of (R)-2-haloacid dehalogenase (hadD) from Pseudomonas putida (Arthrobacter siderocapsulatus).